Reading from the N-terminus, the 448-residue chain is Tumor necrosis factor receptor superfamily member EDAR (448 aa).

The N-terminal stretch at 1–26 is a signal peptide; that stretch reads MAHVGDCTQTPWLPVLVVSLMCSARA. Residues 27–187 lie on the Extracellular side of the membrane; the sequence is EYSNCGENEY…LSGQGHLATA (161 aa). TNFR-Cys repeat units lie at residues 30–71, 73–113, and 115–148; these read NCGE…DYGC, PCPA…DAEC, and PCLP…TKEC. 6 disulfides stabilise this stretch: C31–C44, C47–C60, C50–C71, C74–C87, C93–C113, and C135–C148. N-linked (GlcNAc...) asparagine glycosylation occurs at N38. The helical transmembrane segment at 188-208 threads the bilayer; the sequence is LIIAMSTIFIMAIAIVLIIMF. Topologically, residues 209–448 are cytoplasmic; that stretch reads YILKTKPSAP…PPASQPHAAS (240 aa). The disordered stretch occupies residues 220-297; the sequence is CCTSHPGKSV…EEPAPDKQGS (78 aa). Residues 233 to 243 are compositionally biased toward basic and acidic residues; sequence VSKDEEKKEAP. Residues 271-283 are compositionally biased toward polar residues; it reads DASSENEQLLSRS. The 74-residue stretch at 358 to 431 folds into the Death domain; sequence RMLSSTYNSE…DAVESLCADI (74 aa).

As to quaternary structure, binds to EDARADD. Associates with TRAF1, TRAF2, TRAF3 and NIK. Detected in fetal kidney, lung, skin and cultured neonatal epidermal keratinocytes. Not detected in lymphoblast and fibroblast cell lines.

The protein resides in the membrane. In terms of biological role, receptor for EDA isoform A1, but not for EDA isoform A2. Mediates the activation of NF-kappa-B and JNK. May promote caspase-independent cell death. This chain is Tumor necrosis factor receptor superfamily member EDAR (EDAR), found in Homo sapiens (Human).